A 72-amino-acid polypeptide reads, in one-letter code: MIIPVRCFSCGRVIASDYVRFTEACTKIINETGREPRGEEKAKILDDLGVKRYCCRRMILSHKDLIDEVLPY.

Residues C7, C10, C54, and C55 each contribute to the Zn(2+) site.

The protein belongs to the archaeal Rpo10/eukaryotic RPB10 RNA polymerase subunit family. As to quaternary structure, part of the RNA polymerase complex. Zn(2+) is required as a cofactor.

It localises to the cytoplasm. It carries out the reaction RNA(n) + a ribonucleoside 5'-triphosphate = RNA(n+1) + diphosphate. DNA-dependent RNA polymerase (RNAP) catalyzes the transcription of DNA into RNA using the four ribonucleoside triphosphates as substrates. The sequence is that of DNA-directed RNA polymerase subunit Rpo10 from Picrophilus torridus (strain ATCC 700027 / DSM 9790 / JCM 10055 / NBRC 100828 / KAW 2/3).